Consider the following 487-residue polypeptide: Cell wall protein TIR4 (487 aa).

The signal sequence occupies residues 1–22 (MAYSKITLLAALAAIAYAQTQA). Tandem repeats lie at residues 137 to 148 (SSSVAPSSSEVV), 149 to 160 (SSSVAPSSSEVV), 161 to 172 (SSSVAPSSSEVV), 173 to 184 (SSSVASSSSEVA), 185 to 196 (SSSVAPSSSEVV), 197 to 208 (SSSVASSSSEVA), 209 to 220 (SSSVAPSSSEVV), 221 to 232 (SSSVAPSSSEVV), 233 to 244 (SSSVASSSSEVA), 245 to 256 (SSSVAPSSSEVV), and 257 to 268 (SSSVASSTSEAT). Residues 137–268 (SSSVAPSSSE…SVASSTSEAT (132 aa)) form an 11 X 12 AA approximate tandem repeats, Ser-rich region. The tract at residues 206–299 (EVASSSVAPS…SVSSSSAVSS (94 aa)) is disordered. 5 N-linked (GlcNAc...) asparagine glycosylation sites follow: Asn-327, Asn-348, Asn-368, Asn-403, and Asn-404. The GPI-anchor amidated asparagine moiety is linked to residue Asn-465. Residues 466-487 (GAAKAVIGMGAGALAAVAAMLL) constitute a propeptide, removed in mature form.

The protein belongs to the SRP1/TIP1 family. Post-translationally, the GPI-anchor is attached to the protein in the endoplasmic reticulum and serves to target the protein to the cell surface. There, the glucosamine-inositol phospholipid moiety is cleaved off and the GPI-modified mannoprotein is covalently attached via its lipidless GPI glycan remnant to the 1,6-beta-glucan of the outer cell wall layer.

Its subcellular location is the secreted. The protein resides in the cell wall. It is found in the membrane. Functionally, component of the cell wall. Required for anaerobic growth. This is Cell wall protein TIR4 (TIR4) from Saccharomyces cerevisiae (strain ATCC 204508 / S288c) (Baker's yeast).